A 179-amino-acid polypeptide reads, in one-letter code: MAKADKATAVAEIAEKFKEATAAVVTEYRGLTVSNLAELRRSLGNSTTYTVAKNTLVKRAAVEAGVEGLDDMFAGPTAIAFINGEPVDAAKAIKKFAKDNKALIVKGGYMDGRALTVGEVERIADLESREVLLSKLAGAMKAKQSQAAALFVAPASQVARLAAALQEKKAAGDSAESAA.

This sequence belongs to the universal ribosomal protein uL10 family. As to quaternary structure, part of the ribosomal stalk of the 50S ribosomal subunit. The N-terminus interacts with L11 and the large rRNA to form the base of the stalk. The C-terminus forms an elongated spine to which L12 dimers bind in a sequential fashion forming a multimeric L10(L12)X complex.

Its function is as follows. Forms part of the ribosomal stalk, playing a central role in the interaction of the ribosome with GTP-bound translation factors. This chain is Large ribosomal subunit protein uL10, found in Mycolicibacterium vanbaalenii (strain DSM 7251 / JCM 13017 / BCRC 16820 / KCTC 9966 / NRRL B-24157 / PYR-1) (Mycobacterium vanbaalenii).